Reading from the N-terminus, the 337-residue chain is HTH-type transcriptional regulator MalR (337 aa).

Positions 1-56 constitute an HTH lacI-type domain; it reads MVTIKDIAQAANVSTSTVSRVISGNPRISMQTREKVKATMKSFNYQPNRAARTLAT. Residues 4–23 constitute a DNA-binding region (H-T-H motif); sequence IKDIAQAANVSTSTVSRVIS.

Functionally, transcriptional repressor of the malA gene for maltase. The sequence is that of HTH-type transcriptional regulator MalR (malR) from Staphylococcus xylosus.